Reading from the N-terminus, the 392-residue chain is Phosphoglycerate kinase (392 aa).

Residues 21-23, Arg-36, 59-62, Arg-113, and Arg-146 contribute to the substrate site; these read DFN and HLGR. ATP-binding positions include Lys-197, Glu-319, and 345–348; that span reads GGDT.

This sequence belongs to the phosphoglycerate kinase family. As to quaternary structure, monomer.

It localises to the cytoplasm. The catalysed reaction is (2R)-3-phosphoglycerate + ATP = (2R)-3-phospho-glyceroyl phosphate + ADP. It participates in carbohydrate degradation; glycolysis; pyruvate from D-glyceraldehyde 3-phosphate: step 2/5. The polypeptide is Phosphoglycerate kinase (Francisella tularensis subsp. tularensis (strain FSC 198)).